We begin with the raw amino-acid sequence, 562 residues long: Potassium-transporting ATPase potassium-binding subunit (562 aa).

Helical transmembrane passes span 6-26, 62-82, 132-152, 170-190, 253-273, 283-303, 327-347, 356-376, 379-399, 416-436, 483-503, and 526-546; these read FLLIASFMLVLLLLARPLGSF, YALAILWFNLLGLALLFALLM, GLAVQNFLSAATGIAVAFALI, VFRITLYVLLPISLLIALFFV, FVQMLAIFLIPCALCFSFGQV, LIWAMSLIFVVAVVVVMYAEL, FGILATSMFSVVTTAASCGAV, ALGGMVPMWLMQIGEVVFGGV, GLYGMLLFVLLTVFIAGLMIG, MTALAILVTPTLVLLGSALAI, LLLAFAMFVGRFGVILPVLAI, and LFIGLLVGTVLLVGALTFVPA.

It belongs to the KdpA family. In terms of assembly, the system is composed of three essential subunits: KdpA, KdpB and KdpC.

It localises to the cell inner membrane. Functionally, part of the high-affinity ATP-driven potassium transport (or Kdp) system, which catalyzes the hydrolysis of ATP coupled with the electrogenic transport of potassium into the cytoplasm. This subunit binds the periplasmic potassium ions and delivers the ions to the membrane domain of KdpB through an intramembrane tunnel. The sequence is that of Potassium-transporting ATPase potassium-binding subunit from Serratia proteamaculans (strain 568).